The chain runs to 240 residues: Fibronectin type III domain-containing protein 5 (240 aa).

The segment covering 1–10 (MQAARGGAGR) has biased composition (gly residues). Residues 1–30 (MQAARGGAGRPGREGRGLERECERSPGVGA) form a disordered region. Over residues 11 to 24 (PGREGRGLERECER) the composition is skewed to basic and acidic residues. The Fibronectin type-III domain occupies 64 to 155 (APVNVTVRHL…EPVLFKTPRE (92 aa)). Residues N67 and N112 are each glycosylated (N-linked (GlcNAc...) asparagine). A helical membrane pass occupies residues 181-201 (GEVLIIVVVLFMWAGVIALFC). Residues 210–221 (NEPNNNKEKTKS) show a composition bias toward basic and acidic residues. The disordered stretch occupies residues 210-240 (NEPNNNKEKTKSASETSTPEHQGGGLLRSKI). Positions 231–240 (QGGGLLRSKI) are enriched in gly residues. Residues 238–240 (SKI) carry the Microbody targeting signal motif.

As to quaternary structure, dimer; may exist in other oligomeric forms. Post-translationally, N-Glycosylated. The extracellular domain is cleaved and released from the cell membrane.

The protein resides in the cell membrane. Its subcellular location is the peroxisome membrane. The protein localises to the secreted. Mediates beneficial effects of muscular exercise. Induces browning of white adipose tissue by stimulating UCP1 expression, at least in part, via the nuclear receptor PPARA. This chain is Fibronectin type III domain-containing protein 5 (Fndc5), found in Rattus norvegicus (Rat).